The sequence spans 621 residues: 1-deoxy-D-xylulose-5-phosphate synthase (621 aa).

Residues histidine 80 and 121-123 (GHS) each bind thiamine diphosphate. Aspartate 152 contributes to the Mg(2+) binding site. Thiamine diphosphate contacts are provided by residues 153–154 (GA), asparagine 181, tyrosine 288, and glutamate 370. A Mg(2+)-binding site is contributed by asparagine 181.

This sequence belongs to the transketolase family. DXPS subfamily. In terms of assembly, homodimer. It depends on Mg(2+) as a cofactor. Thiamine diphosphate is required as a cofactor.

The catalysed reaction is D-glyceraldehyde 3-phosphate + pyruvate + H(+) = 1-deoxy-D-xylulose 5-phosphate + CO2. Its pathway is metabolic intermediate biosynthesis; 1-deoxy-D-xylulose 5-phosphate biosynthesis; 1-deoxy-D-xylulose 5-phosphate from D-glyceraldehyde 3-phosphate and pyruvate: step 1/1. Catalyzes the acyloin condensation reaction between C atoms 2 and 3 of pyruvate and glyceraldehyde 3-phosphate to yield 1-deoxy-D-xylulose-5-phosphate (DXP). In Aeromonas hydrophila subsp. hydrophila (strain ATCC 7966 / DSM 30187 / BCRC 13018 / CCUG 14551 / JCM 1027 / KCTC 2358 / NCIMB 9240 / NCTC 8049), this protein is 1-deoxy-D-xylulose-5-phosphate synthase.